The chain runs to 160 residues: tRNA (cytidine(56)-2'-O)-methyltransferase (160 aa).

Residues leucine 68, 94-98, and 112-119 contribute to the S-adenosyl-L-methionine site; these read GAEKV and IGNQPHSE.

This sequence belongs to the aTrm56 family. As to quaternary structure, homodimer.

Its subcellular location is the cytoplasm. The catalysed reaction is cytidine(56) in tRNA + S-adenosyl-L-methionine = 2'-O-methylcytidine(56) in tRNA + S-adenosyl-L-homocysteine + H(+). Its function is as follows. Specifically catalyzes the AdoMet-dependent 2'-O-ribose methylation of cytidine at position 56 in tRNAs. The protein is tRNA (cytidine(56)-2'-O)-methyltransferase of Saccharolobus solfataricus (strain ATCC 35092 / DSM 1617 / JCM 11322 / P2) (Sulfolobus solfataricus).